The chain runs to 214 residues: Outer-membrane lipoprotein LolB (214 aa).

Positions M1–G30 are cleaved as a signal peptide. The N-palmitoyl cysteine moiety is linked to residue C31. C31 carries the S-diacylglycerol cysteine lipid modification.

This sequence belongs to the LolB family. In terms of assembly, monomer.

Its subcellular location is the cell outer membrane. Plays a critical role in the incorporation of lipoproteins in the outer membrane after they are released by the LolA protein. The polypeptide is Outer-membrane lipoprotein LolB (Chromohalobacter salexigens (strain ATCC BAA-138 / DSM 3043 / CIP 106854 / NCIMB 13768 / 1H11)).